The following is a 348-amino-acid chain: Glycerol-1-phosphate dehydrogenase [NAD(P)+] (348 aa).

NAD(+) is bound by residues 94–98 (GKVID) and threonine 116. Aspartate 121 lines the substrate pocket. Serine 125 is an NAD(+) binding site. Aspartate 168 serves as a coordination point for substrate. Aspartate 168 and histidine 248 together coordinate Zn(2+). A substrate-binding site is contributed by histidine 252. Histidine 264 is a binding site for Zn(2+).

The protein belongs to the glycerol-1-phosphate dehydrogenase family. As to quaternary structure, homooctamer. Zn(2+) serves as cofactor.

The protein localises to the cytoplasm. The enzyme catalyses sn-glycerol 1-phosphate + NAD(+) = dihydroxyacetone phosphate + NADH + H(+). It carries out the reaction sn-glycerol 1-phosphate + NADP(+) = dihydroxyacetone phosphate + NADPH + H(+). Its pathway is membrane lipid metabolism; glycerophospholipid metabolism. Its function is as follows. Catalyzes the NAD(P)H-dependent reduction of dihydroxyacetonephosphate (DHAP or glycerone phosphate) to glycerol 1-phosphate (G1P). The G1P thus generated is used as the glycerophosphate backbone of phospholipids in the cellular membranes of Archaea. The protein is Glycerol-1-phosphate dehydrogenase [NAD(P)+] of Methanosphaera stadtmanae (strain ATCC 43021 / DSM 3091 / JCM 11832 / MCB-3).